A 428-amino-acid polypeptide reads, in one-letter code: 3-phosphoshikimate 1-carboxyvinyltransferase (428 aa).

Positions 22, 23, and 27 each coordinate 3-phosphoshikimate. Lysine 22 is a phosphoenolpyruvate binding site. The phosphoenolpyruvate site is built by glycine 96 and arginine 124. Residues serine 171, serine 172, glutamine 173, serine 198, aspartate 311, and lysine 338 each coordinate 3-phosphoshikimate. Glutamine 173 contributes to the phosphoenolpyruvate binding site. Aspartate 311 (proton acceptor) is an active-site residue. Phosphoenolpyruvate contacts are provided by arginine 342 and arginine 383.

The protein belongs to the EPSP synthase family. As to quaternary structure, monomer.

It is found in the cytoplasm. It catalyses the reaction 3-phosphoshikimate + phosphoenolpyruvate = 5-O-(1-carboxyvinyl)-3-phosphoshikimate + phosphate. It participates in metabolic intermediate biosynthesis; chorismate biosynthesis. Its function is as follows. Catalyzes the transfer of the enolpyruvyl moiety of phosphoenolpyruvate (PEP) to the 5-hydroxyl of shikimate-3-phosphate (S3P) to produce enolpyruvyl shikimate-3-phosphate and inorganic phosphate. In Methanopyrus kandleri (strain AV19 / DSM 6324 / JCM 9639 / NBRC 100938), this protein is 3-phosphoshikimate 1-carboxyvinyltransferase.